A 1181-amino-acid chain; its full sequence is WD repeat-containing protein 35 (1181 aa).

WD repeat units follow at residues 4 to 43 (YLSK…VLKL), 61 to 100 (LSMN…VWML), 105 to 143 (WIEE…IVGS), 147 to 185 (NRIW…IYDN), 193 to 241 (MKLS…IMRH), and 246 to 288 (NPVL…IVQF).

Component of the IFT complex A (IFT-A) complex. IFT-A complex is divided into a core subcomplex composed of IFT122:IFT140:WDR19 which is associated with TULP3 and a peripheral subcomplex composed of IFT43:WDR35:TTC21B. Interacts directy with IFT122, ITF43 and TTC21B. Interacts with IFT43. Interacts with CFAP61.

The protein resides in the cytoplasm. Its subcellular location is the cytoskeleton. The protein localises to the microtubule organizing center. It localises to the centrosome. It is found in the cilium axoneme. The protein resides in the cilium basal body. In terms of biological role, as a component of the IFT complex A (IFT-A), a complex required for retrograde ciliary transport and entry into cilia of G protein-coupled receptors (GPCRs), it is involved in ciliogenesis and ciliary protein trafficking. May promote CASP3 activation and TNF-stimulated apoptosis. The polypeptide is WD repeat-containing protein 35 (Homo sapiens (Human)).